Reading from the N-terminus, the 679-residue chain is Sodium-dependent phosphate transporter 1 (679 aa).

The next 6 membrane-spanning stretches (helical) occupy residues 21–41, 62–82, 100–120, 158–178, 203–223, and 230–250; these read YLWMLILGFIIAFVLAFSVGA, ACILASIFETVGSVLLGAKVS, GLLMAGSVSAMFGSAVWQLVA, IVMSWFVSPLLSGIMSGILFF, ACTVGINLFSIMYTGAPLLGF, and GTILISVGCAVFCALIVWFFV. Phosphoserine is present on residues S265 and S269. Positions 268–288 are disordered; it reads ESPLMEKKNSLKEDHEETKLS. A compositionally biased stretch (basic and acidic residues) spans 271 to 286; that stretch reads LMEKKNSLKEDHEETK. 4 helical membrane-spanning segments follow: residues 511 to 531, 558 to 578, 600 to 620, and 650 to 670; these read VSLLFQFLQILTACFGSFAHG, VATPIWLLLYGGVGICIGLWV, FSIELASALTVVIASNIGLPI, and IFMAWFVTVPISGVISAAIMA. The a stretch occupies residues 550 to 558; the sequence is DTGDVSSKV.

Belongs to the inorganic phosphate transporter (PiT) (TC 2.A.20) family.

It localises to the cell membrane. The enzyme catalyses 2 Na(+)(out) + phosphate(out) = 2 Na(+)(in) + phosphate(in). Sodium-phosphate symporter which preferentially transports the monovalent form of phosphate with a stoichiometry of two sodium ions per phosphate ion. May play a role in extracellular matrix and cartilage calcification as well as in vascular calcification. Essential for cell proliferation but this function is independent of its phosphate transporter activity. The chain is Sodium-dependent phosphate transporter 1 (SLC20A1) from Pongo abelii (Sumatran orangutan).